Consider the following 487-residue polypeptide: DNA-dependent metalloprotease SPRTN (487 aa).

Methionine 1 is subject to N-acetylmethionine. Residues 45-212 (LQGLFVLFND…KTCGGTYIKI (168 aa)) form the SprT-like domain. Zn(2+) is bound at residue histidine 111. Residue glutamate 112 is part of the active site. The Zn(2+) site is built by histidine 115 and histidine 130. Residues 219 to 248 (SKKGKGKTKLRKQPVSEAENKDKPNRGEKQ) form a disordered region. Residues 220–230 (KKGKGKTKLRK) are compositionally biased toward basic residues. N6-acetyllysine is present on lysine 230. Over residues 236-247 (AENKDKPNRGEK) the composition is skewed to basic and acidic residues. The SHP-box signature appears at 253 to 261 (FTGKGYVLG). The residue at position 267 (serine 267) is a Phosphoserine. Positions 280 to 289 (SQEPLSQDHS) are enriched in polar residues. Residues 280-317 (SQEPLSQDHSANALRPHSKTEVKFEQNGPSKKTSVASP) are disordered. Residue lysine 302 forms a Glycyl lysine isopeptide (Lys-Gly) (interchain with G-Cter in SUMO2) linkage. Positions 306 to 317 (NGPSKKTSVASP) are enriched in polar residues. Residues 324–331 (QNVLSNYF) carry the PIP-box motif. A Glycyl lysine isopeptide (Lys-Gly) (interchain with G-Cter in SUMO2); alternate cross-link involves residue lysine 340. Lysine 340 is covalently cross-linked (Glycyl lysine isopeptide (Lys-Gly) (interchain with G-Cter in ubiquitin); alternate). Residues 347-379 (GSPVKSLTVGDSTTKSVSAGSQRRVTSSRTSLR) are disordered. A Phosphoserine modification is found at serine 373. The Nuclear localization signal signature appears at 401-412 (GKLPSKRPRIED). A Glycyl lysine isopeptide (Lys-Gly) (interchain with G-Cter in ubiquitin) cross-link involves residue lysine 413. Residues lysine 422 and lysine 423 each participate in a glycyl lysine isopeptide (Lys-Gly) (interchain with G-Cter in SUMO2) cross-link. The disordered stretch occupies residues 427 to 455 (QSGGGDVTSSSHPPAAAQSPSGASGQSRV). Positions 435–453 (SSSHPPAAAQSPSGASGQS) are enriched in low complexity. The UBZ4-type zinc finger occupies 455-482 (VVHCPVCQDEVSETQINEHLDWCLERDS). Cysteine 458, cysteine 461, histidine 473, and cysteine 477 together coordinate Zn(2+). Lysine 486 is covalently cross-linked (Glycyl lysine isopeptide (Lys-Gly) (interchain with G-Cter in SUMO2)).

It belongs to the Spartan family. In terms of assembly, homodimer. Interacts (VIA PIP-box) with PCNA (when ubiquitinated). Interacts (via its SHP-box) with VCP/p97. Interacts with RAD18. Interacts with KCTD13 and POLD3. Requires Zn(2+) as cofactor. In terms of processing, autocatalytically cleaved in response to double-stranded DNA-binding: autocatalytic cleavage takes place in trans and leads to inactivation. Monoubiquitinated; monoubiquitination promotes exclusion from chromatin. Deubiquitinated by VCPIP1: deubiquitination is required for subsequent acetylation and recruitment to chromatin and DNA damage sites. Post-translationally, acetylated following deubiquitination by VCPIP1, leading to recruitment to chromatin and DNA damage sites. In terms of processing, phosphorylation by CHEK1 promotes recruitment to chromatin.

Its subcellular location is the nucleus. It is found in the chromosome. Its activity is regulated as follows. DNA-binding activates the protease activity: single-stranded DNA-binding specifically activates ability to cleave covalent DNA-protein cross-links (DPCs). In contrast, double-stranded DNA-binding specifically activates autocatalytic cleavage, and subsequent inactivation. DNA-dependent metalloendopeptidase that mediates the proteolytic cleavage of covalent DNA-protein cross-links (DPCs) during DNA synthesis, thereby playing a key role in maintaining genomic integrity. DPCs are highly toxic DNA lesions that interfere with essential chromatin transactions, such as replication and transcription, and which are induced by reactive agents, such as UV light or formaldehyde. Associates with the DNA replication machinery and specifically removes DPCs during DNA synthesis. Catalyzes proteolytic cleavage of the HMCES DNA-protein cross-link following unfolding by the BRIP1/FANCJ helicase. Acts as a pleiotropic protease for DNA-binding proteins cross-linked with DNA, such as TOP1, TOP2A, histones H3 and H4. Mediates degradation of DPCs that are not ubiquitinated, while it is not able to degrade ubiquitinated DPCs. SPRTN activation requires polymerase collision with DPCs followed by helicase bypass of DPCs. Involved in recruitment of VCP/p97 to sites of DNA damage. Also acts as an activator of CHEK1 during normal DNA replication by mediating proteolytic cleavage of CHEK1, thereby promoting CHEK1 removal from chromatin and subsequent activation. Does not activate CHEK1 in response to DNA damage. May also act as a 'reader' of ubiquitinated PCNA: recruited to sites of UV damage and interacts with ubiquitinated PCNA and RAD18, the E3 ubiquitin ligase that monoubiquitinates PCNA. Facilitates chromatin association of RAD18 and is required for efficient PCNA monoubiquitination, promoting a feed-forward loop to enhance PCNA ubiquitination and translesion DNA synthesis. This Bos taurus (Bovine) protein is DNA-dependent metalloprotease SPRTN.